A 554-amino-acid polypeptide reads, in one-letter code: Phospholipase B-like protein E (554 aa).

An N-terminal signal peptide occupies residues 1-19 (MKLFILLIVIVFLISNSYS). N-linked (GlcNAc...) asparagine glycans are attached at residues asparagine 113, asparagine 140, asparagine 231, asparagine 302, asparagine 340, and asparagine 546.

This sequence belongs to the phospholipase B-like family.

Its subcellular location is the secreted. Probable phospholipase. This Dictyostelium discoideum (Social amoeba) protein is Phospholipase B-like protein E (plbE).